A 234-amino-acid chain; its full sequence is Sugar fermentation stimulation protein A (234 aa).

A DNA-binding region (H-T-H motif) is located at residues 201–220; that stretch reads LLSEAQQRGVEILAYKAELS.

It belongs to the SfsA family.

In terms of biological role, binds to DNA non-specifically. Could be a regulatory factor involved in maltose metabolism. This chain is Sugar fermentation stimulation protein A, found in Escherichia coli (strain SMS-3-5 / SECEC).